Here is a 65-residue protein sequence, read N- to C-terminus: Metallothionein (65 aa).

It belongs to the metallothionein superfamily. Type 4 family.

Metallothioneins have a high content of cysteine residues that bind various heavy metals. The polypeptide is Metallothionein (Paracentrotus lividus (Common sea urchin)).